A 185-amino-acid polypeptide reads, in one-letter code: Elongation factor P (185 aa).

Belongs to the elongation factor P family.

The protein localises to the cytoplasm. Its pathway is protein biosynthesis; polypeptide chain elongation. Functionally, involved in peptide bond synthesis. Stimulates efficient translation and peptide-bond synthesis on native or reconstituted 70S ribosomes in vitro. Probably functions indirectly by altering the affinity of the ribosome for aminoacyl-tRNA, thus increasing their reactivity as acceptors for peptidyl transferase. The chain is Elongation factor P from Agathobacter rectalis (strain ATCC 33656 / DSM 3377 / JCM 17463 / KCTC 5835 / VPI 0990) (Eubacterium rectale).